Reading from the N-terminus, the 709-residue chain is ATP-binding cassette sub-family F member 3 (709 aa).

Ala2 carries the post-translational modification N-acetylalanine. Ser83 carries the post-translational modification Phosphoserine. A compositionally biased stretch (basic and acidic residues) spans 129 to 143 (RLKAKQEKRSEKETL). Positions 129–171 (RLKAKQEKRSEKETLKTSNPLVLEEASASQAGSRKESRLESSG) are disordered. Phosphoserine occurs at positions 155, 157, and 161. Residues 161-171 (SRKESRLESSG) show a composition bias toward basic and acidic residues. 2 consecutive ABC transporter domains span residues 178 to 424 (VRIE…LNQQ) and 492 to 707 (LQLD…RREG). 210 to 217 (GRNGLGKT) contributes to the ATP binding site. Ser283 is modified (phosphoserine). 525-532 (GENGAGKS) provides a ligand contact to ATP.

The protein belongs to the ABC transporter superfamily. ABCF family. EF3 subfamily.

In terms of biological role, displays an antiviral effect against flaviviruses such as west Nile virus (WNV) in the presence of OAS1B. The sequence is that of ATP-binding cassette sub-family F member 3 (Abcf3) from Mus musculus (Mouse).